The primary structure comprises 335 residues: F420-dependent glucose-6-phosphate dehydrogenase 1 (335 aa).

Aspartate 38 provides a ligand contact to coenzyme F420-(gamma-Glu)n. The Proton donor role is filled by histidine 39. Residues threonine 75 and 106–107 (TG) contribute to the coenzyme F420-(gamma-Glu)n site. Glutamate 108 serves as the catalytic Proton acceptor. Coenzyme F420-(gamma-Glu)n contacts are provided by residues asparagine 111, 176 to 177 (GG), and 179 to 180 (VV). Substrate is bound by residues threonine 194, lysine 197, lysine 258, and arginine 282.

Belongs to the F420-dependent glucose-6-phosphate dehydrogenase family. As to quaternary structure, homodimer.

The catalysed reaction is oxidized coenzyme F420-(gamma-L-Glu)(n) + D-glucose 6-phosphate + H(+) = 6-phospho-D-glucono-1,5-lactone + reduced coenzyme F420-(gamma-L-Glu)(n). Catalyzes the coenzyme F420-dependent oxidation of glucose 6-phosphate (G6P) to 6-phosphogluconolactone. In Rhodococcus jostii (strain RHA1), this protein is F420-dependent glucose-6-phosphate dehydrogenase 1.